Consider the following 569-residue polypeptide: Dihydroorotate dehydrogenase (quinone), mitochondrial (569 aa).

Residues 1–23 constitute a mitochondrion transit peptide; it reads MISKLKPQFMFLPKKHILSYCRK. Residues 143-163 traverse the membrane as a helical segment; the sequence is IIFLLFVSLFGLYGFFESYNP. Residues 225–229 and Thr249 contribute to the FMN site; that span reads AGFDK. A substrate-binding site is contributed by Lys229. Residues 274-278 and Asn342 contribute to the substrate site; that span reads NSCGF. Residue Asn342 coordinates FMN. Ser345 (nucleophile) is an active-site residue. A substrate-binding site is contributed by Asn347. Residue Lys429 participates in FMN binding. Residue 458 to 459 participates in substrate binding; that stretch reads NT. FMN-binding positions include 477 to 478, 505 to 507, and 528 to 529; these read SG, SGG, and YS.

This sequence belongs to the dihydroorotate dehydrogenase family. Type 2 subfamily. As to quaternary structure, monomer. FMN is required as a cofactor.

It localises to the mitochondrion inner membrane. The catalysed reaction is (S)-dihydroorotate + a quinone = orotate + a quinol. The protein operates within pyrimidine metabolism; UMP biosynthesis via de novo pathway; orotate from (S)-dihydroorotate (quinone route): step 1/1. Its function is as follows. Catalyzes the conversion of dihydroorotate to orotate with quinone as electron acceptor. The chain is Dihydroorotate dehydrogenase (quinone), mitochondrial from Plasmodium falciparum (isolate 3D7).